Consider the following 382-residue polypeptide: 1-deoxy-D-xylulose 5-phosphate reductoisomerase (382 aa).

Residues Thr-10, Gly-11, Ser-12, Ile-13, Gly-36, and Asn-122 each coordinate NADPH. Lys-123 contributes to the 1-deoxy-D-xylulose 5-phosphate binding site. Glu-124 lines the NADPH pocket. Mn(2+) is bound at residue Asp-148. The 1-deoxy-D-xylulose 5-phosphate site is built by Ser-149, Glu-150, Ser-174, and His-197. Glu-150 contacts Mn(2+). Gly-203 contributes to the NADPH binding site. Ser-210, Asn-215, Lys-216, and Glu-219 together coordinate 1-deoxy-D-xylulose 5-phosphate. Residue Glu-219 participates in Mn(2+) binding.

The protein belongs to the DXR family. Mg(2+) is required as a cofactor. Requires Mn(2+) as cofactor.

The catalysed reaction is 2-C-methyl-D-erythritol 4-phosphate + NADP(+) = 1-deoxy-D-xylulose 5-phosphate + NADPH + H(+). It participates in isoprenoid biosynthesis; isopentenyl diphosphate biosynthesis via DXP pathway; isopentenyl diphosphate from 1-deoxy-D-xylulose 5-phosphate: step 1/6. Functionally, catalyzes the NADPH-dependent rearrangement and reduction of 1-deoxy-D-xylulose-5-phosphate (DXP) to 2-C-methyl-D-erythritol 4-phosphate (MEP). This is 1-deoxy-D-xylulose 5-phosphate reductoisomerase from Chlorobium chlorochromatii (strain CaD3).